The primary structure comprises 501 residues: Cytochrome P450 2J4 (501 aa).

2 consecutive transmembrane segments (helical) span residues 12–32 (IWAA…LLLA) and 77–97 (NIFS…LPLI). Residue cysteine 447 participates in heme binding.

It belongs to the cytochrome P450 family. Requires heme as cofactor. As to expression, expressed in small intestinal enterocytes (at protein level). In the intestinal crypt, expressed at higher levels in the mature villous cells than in undifferentiated crypt cells (at protein level). Expressed in liver, kidney, lung, and olfactory mucosa (at protein level).

It localises to the endoplasmic reticulum membrane. The protein resides in the microsome membrane. The enzyme catalyses an organic molecule + reduced [NADPH--hemoprotein reductase] + O2 = an alcohol + oxidized [NADPH--hemoprotein reductase] + H2O + H(+). It catalyses the reaction (5Z,8Z,11Z,14Z)-eicosatetraenoate + reduced [NADPH--hemoprotein reductase] + O2 = 19-hydroxy-(5Z,8Z,11Z,14Z)-eicosatetraenoate + oxidized [NADPH--hemoprotein reductase] + H2O + H(+). The catalysed reaction is all-trans-retinal + reduced [NADPH--hemoprotein reductase] + O2 = all-trans-retinoate + oxidized [NADPH--hemoprotein reductase] + H2O + 2 H(+). It carries out the reaction 9-cis-retinal + reduced [NADPH--hemoprotein reductase] + O2 = 9-cis-retinoate + oxidized [NADPH--hemoprotein reductase] + H2O + 2 H(+). Its pathway is lipid metabolism; arachidonate metabolism. It participates in cofactor metabolism; retinol metabolism. A cytochrome P450 monooxygenase that may play a major role in intestinal retinoid metabolism. Catalyzes the oxidative transformation of all-trans retinal and 9-cis-retinal to the corresponding active forms all-trans and 9-cis retinoic acids. Catalyzes the hydroxylation of carbon-hydrogen bonds. Hydroxylates arachidonic acid predominantly at the omega-1 position. Mechanistically, uses molecular oxygen inserting one oxygen atom into a substrate, and reducing the second into a water molecule, with two electrons provided by NADPH via cytochrome P450 reductase (CPR; NADPH--hemoprotein reductase). The sequence is that of Cytochrome P450 2J4 from Rattus norvegicus (Rat).